The following is a 203-amino-acid chain: Pyridoxine/pyridoxamine 5'-phosphate oxidase (203 aa).

FMN-binding positions include arginine 50–lysine 55, tyrosine 65–threonine 66, lysine 71, lysine 72, and glutamine 94. Lysine 55 provides a ligand contact to substrate. Substrate is bound by residues tyrosine 112, arginine 116, and serine 120. Residues glutamine 129 to serine 130 and tryptophan 174 each bind FMN. Arginine 180–histidine 182 lines the substrate pocket. Residue arginine 184 coordinates FMN.

The protein belongs to the pyridoxamine 5'-phosphate oxidase family. In terms of assembly, homodimer. FMN serves as cofactor.

The enzyme catalyses pyridoxamine 5'-phosphate + O2 + H2O = pyridoxal 5'-phosphate + H2O2 + NH4(+). It carries out the reaction pyridoxine 5'-phosphate + O2 = pyridoxal 5'-phosphate + H2O2. Its pathway is cofactor metabolism; pyridoxal 5'-phosphate salvage; pyridoxal 5'-phosphate from pyridoxamine 5'-phosphate: step 1/1. The protein operates within cofactor metabolism; pyridoxal 5'-phosphate salvage; pyridoxal 5'-phosphate from pyridoxine 5'-phosphate: step 1/1. In terms of biological role, catalyzes the oxidation of either pyridoxine 5'-phosphate (PNP) or pyridoxamine 5'-phosphate (PMP) into pyridoxal 5'-phosphate (PLP). The polypeptide is Pyridoxine/pyridoxamine 5'-phosphate oxidase (Brucella canis (strain ATCC 23365 / NCTC 10854 / RM-666)).